Reading from the N-terminus, the 723-residue chain is Catalase-peroxidase (723 aa).

A cross-link (tryptophyl-tyrosyl-methioninium (Trp-Tyr) (with M-252)) is located at residues 98–226 (WHSAGSYRVG…LAAVMMGLIY (129 aa)). H99 acts as the Proton acceptor in catalysis. The segment at residues 226-252 (YVNPEGVDGNPDPLKTAKDMRVTFARM) is a cross-link (tryptophyl-tyrosyl-methioninium (Tyr-Met) (with W-98)). Position 267 (H267) interacts with heme b.

This sequence belongs to the peroxidase family. Peroxidase/catalase subfamily. Homodimer or homotetramer. It depends on heme b as a cofactor. In terms of processing, formation of the three residue Trp-Tyr-Met cross-link is important for the catalase, but not the peroxidase activity of the enzyme.

It catalyses the reaction H2O2 + AH2 = A + 2 H2O. The catalysed reaction is 2 H2O2 = O2 + 2 H2O. Bifunctional enzyme with both catalase and broad-spectrum peroxidase activity. The sequence is that of Catalase-peroxidase from Vibrio vulnificus (strain YJ016).